The sequence spans 565 residues: Estrogen receptor gamma (565 aa).

Residues 1–168 (MAVASSPEKD…TSGGKTDLHY (168 aa)) are modulating. 2 consecutive NR C4-type zinc fingers follow at residues 169–189 (CAVC…CEGC) and 205–229 (CPAT…LRKC). Positions 169 to 234 (CAVCHDYASG…RLRKCYEVGM (66 aa)) form a DNA-binding region, nuclear receptor. The hinge stretch occupies residues 235–285 (TKCGMRKERGNYRSPQMRRMTRLTSQGRTDSSSVLTGSAVVSLNAPQPSAL). The region spanning 286 to 516 (TSEQLIERLM…DLLLEMLDAH (231 aa)) is the NR LBD domain. The segment at 522 to 565 (RLPRRSPEQEPEDQADAPAPPHSSGSGPSYTWTPSSSEGAGEPQ) is disordered.

The protein belongs to the nuclear hormone receptor family. NR3 subfamily. Homodimer. As to expression, abundant in the ovary and testes, barely detectable in the brain and muscle and undetectable in the liver.

The protein localises to the nucleus. Its function is as follows. The steroid hormones and their receptors are involved in the regulation of eukaryotic gene expression and affect cellular proliferation and differentiation in target tissues. In Micropogonias undulatus (Atlantic croaker), this protein is Estrogen receptor gamma (esr3).